The chain runs to 155 residues: uncharacterized protein (155 aa).

Belongs to the mimivirus L6/L7/L57 family.

This is an uncharacterized protein from Acanthamoeba polyphaga (Amoeba).